The chain runs to 196 residues: Glycerol-3-phosphate acyltransferase (196 aa).

The next 4 membrane-spanning stretches (helical) occupy residues 4–24 (LTLL…AVVI), 80–100 (PFFL…PLYF), 114–134 (AMFP…LLVF), and 155–175 (AYWI…LILW).

This sequence belongs to the PlsY family. Probably interacts with PlsX.

The protein localises to the cell inner membrane. It carries out the reaction an acyl phosphate + sn-glycerol 3-phosphate = a 1-acyl-sn-glycero-3-phosphate + phosphate. The protein operates within lipid metabolism; phospholipid metabolism. Catalyzes the transfer of an acyl group from acyl-phosphate (acyl-PO(4)) to glycerol-3-phosphate (G3P) to form lysophosphatidic acid (LPA). This enzyme utilizes acyl-phosphate as fatty acyl donor, but not acyl-CoA or acyl-ACP. This is Glycerol-3-phosphate acyltransferase from Idiomarina loihiensis (strain ATCC BAA-735 / DSM 15497 / L2-TR).